A 366-amino-acid chain; its full sequence is GTP cyclohydrolase 1 type 2 homolog (366 aa).

Residues His-64, His-65, Asp-102, His-326, and Glu-329 each contribute to the Zn(2+) site.

This sequence belongs to the GTP cyclohydrolase I type 2/NIF3 family. Homohexamer.

In Staphylococcus aureus (strain COL), this protein is GTP cyclohydrolase 1 type 2 homolog.